Consider the following 300-residue polypeptide: uncharacterized protein (300 aa).

The a divalent metal cation site is built by Glu-146, Glu-148, and Asp-177.

Belongs to the FAH family.

This is an uncharacterized protein from Staphylococcus aureus (strain MW2).